The primary structure comprises 474 residues: Dihydrolipoyl dehydrogenase (474 aa).

Residues 39-47 (EKDAYGGTC), lysine 56, and alanine 118 each bind FAD. A disulfide bridge connects residues cysteine 47 and cysteine 52. NAD(+)-binding positions include 186–190 (GGGYI), glutamate 209, and 275–278 (AVGR). The FAD site is built by aspartate 318 and alanine 326. Histidine 450 (proton acceptor) is an active-site residue.

The protein belongs to the class-I pyridine nucleotide-disulfide oxidoreductase family. As to quaternary structure, homodimer. It depends on FAD as a cofactor.

It is found in the cytoplasm. The enzyme catalyses N(6)-[(R)-dihydrolipoyl]-L-lysyl-[protein] + NAD(+) = N(6)-[(R)-lipoyl]-L-lysyl-[protein] + NADH + H(+). In Halobacterium salinarum (strain ATCC 700922 / JCM 11081 / NRC-1) (Halobacterium halobium), this protein is Dihydrolipoyl dehydrogenase (lpdA).